A 313-amino-acid polypeptide reads, in one-letter code: Secreted mono- and diacylglycerol lipase MDL5 (313 aa).

Positions 1-20 are cleaved as a signal peptide; the sequence is MQLQYVLTLLWIIFAQNVFS. A disulfide bridge connects residues cysteine 66 and cysteine 306. N-linked (GlcNAc...) asparagine glycosylation is found at asparagine 72 and asparagine 111. Catalysis depends on serine 180, which acts as the Nucleophile. Aspartate 238 is a catalytic residue. A glycan (N-linked (GlcNAc...) asparagine) is linked at asparagine 263. The active site involves histidine 290.

The protein belongs to the AB hydrolase superfamily. Lipase family. Class 3 subfamily.

It localises to the secreted. Its subcellular location is the cell wall. The catalysed reaction is a monoacylglycerol + H2O = glycerol + a fatty acid + H(+). It catalyses the reaction a diacylglycerol + H2O = a monoacylglycerol + a fatty acid + H(+). Its function is as follows. Secreted lipase involved in Dandruff and seborrheic dermatitis (D/SD) probably via lipase-mediated breakdown of sebaceous lipids and release of irritating free fatty acids. Shows activity against monoglyceride and diglyceride substrates, but not triglyceride substrates and does not exhibit regio-selective production of diacylglycerols. Cleaves oleic acid from 1,2 isomers of diolein on both the 1 and the 2 position of the glycerol backbone, resulting mainly in free fatty acids but no monoolein is detected. Shows activity on monoolein and liberates mostly free fatty acids, but can also perform the reverse reaction and produce diolein. The chain is Secreted mono- and diacylglycerol lipase MDL5 from Malassezia globosa (strain ATCC MYA-4612 / CBS 7966) (Dandruff-associated fungus).